Reading from the N-terminus, the 252-residue chain is Imidazole glycerol phosphate synthase subunit HisF (252 aa).

Active-site residues include Asp11 and Asp130.

The protein belongs to the HisA/HisF family. In terms of assembly, heterodimer of HisH and HisF.

The protein resides in the cytoplasm. The catalysed reaction is 5-[(5-phospho-1-deoxy-D-ribulos-1-ylimino)methylamino]-1-(5-phospho-beta-D-ribosyl)imidazole-4-carboxamide + L-glutamine = D-erythro-1-(imidazol-4-yl)glycerol 3-phosphate + 5-amino-1-(5-phospho-beta-D-ribosyl)imidazole-4-carboxamide + L-glutamate + H(+). The protein operates within amino-acid biosynthesis; L-histidine biosynthesis; L-histidine from 5-phospho-alpha-D-ribose 1-diphosphate: step 5/9. In terms of biological role, IGPS catalyzes the conversion of PRFAR and glutamine to IGP, AICAR and glutamate. The HisF subunit catalyzes the cyclization activity that produces IGP and AICAR from PRFAR using the ammonia provided by the HisH subunit. The sequence is that of Imidazole glycerol phosphate synthase subunit HisF from Bacillus cereus (strain ATCC 10987 / NRS 248).